The primary structure comprises 312 residues: Olfactory receptor 4F3/4F16/4F29 (312 aa).

The Extracellular portion of the chain corresponds to 1 to 25 (MDGENHSVVSEFLFLGLTHSWEIQL). An N-linked (GlcNAc...) asparagine glycan is attached at N5. The chain crosses the membrane as a helical span at residues 26-49 (LLLVFSSVLYVASITGNILIVFSV). The Cytoplasmic segment spans residues 50–57 (TTDPHLHS). The helical transmembrane segment at 58 to 79 (PMYFLLASLSFIDLGACSVTSP) threads the bilayer. Topologically, residues 80-100 (KMIYDLFRKRKVISFGGCIAQ) are extracellular. C97 and C189 are oxidised to a cystine. A helical membrane pass occupies residues 101–120 (IFFIHVVGGVEMVLLIAMAF). Over 121 to 139 (DRYVALCKPLHYLTIMSPR) the chain is Cytoplasmic. A helical transmembrane segment spans residues 140–158 (MCLSFLAVAWTLGVSHSLF). Residues 159 to 195 (QLAFLVNLAFCGPNVLDSFYCDLPRLLRLACTDTYRL) lie on the Extracellular side of the membrane. The helical transmembrane segment at 196 to 219 (QFMVTVNSGFICVGTFFILLISYV) threads the bilayer. Over 220-235 (FILFTVWKHSSGGSSK) the chain is Cytoplasmic. A helical transmembrane segment spans residues 236 to 258 (ALSTLSAHSTVVLLFFGPPMFVY). The Extracellular segment spans residues 259 to 269 (TRPHPNSQMDK). Residues 270–289 (FLAIFDAVLTPFLNPVVYTF) form a helical membrane-spanning segment. Over 290-312 (RNKEMKAAIKRVCKQLVIYKRIS) the chain is Cytoplasmic.

It belongs to the G-protein coupled receptor 1 family.

Its subcellular location is the cell membrane. Functionally, odorant receptor. This is Olfactory receptor 4F3/4F16/4F29 (OR4F3) from Homo sapiens (Human).